A 260-amino-acid polypeptide reads, in one-letter code: Pyridoxine 5'-phosphate synthase (260 aa).

Asparagine 6 contributes to the 3-amino-2-oxopropyl phosphate binding site. A 1-deoxy-D-xylulose 5-phosphate-binding site is contributed by 8–9 (DH). Arginine 17 contributes to the 3-amino-2-oxopropyl phosphate binding site. Histidine 42 acts as the Proton acceptor in catalysis. 1-deoxy-D-xylulose 5-phosphate is bound by residues arginine 44 and histidine 49. Glutamate 69 serves as the catalytic Proton acceptor. Threonine 99 is a 1-deoxy-D-xylulose 5-phosphate binding site. Catalysis depends on histidine 213, which acts as the Proton donor. 3-amino-2-oxopropyl phosphate contacts are provided by residues glycine 214 and 235-236 (GQ).

It belongs to the PNP synthase family. In terms of assembly, homooctamer; tetramer of dimers.

The protein resides in the cytoplasm. The catalysed reaction is 3-amino-2-oxopropyl phosphate + 1-deoxy-D-xylulose 5-phosphate = pyridoxine 5'-phosphate + phosphate + 2 H2O + H(+). The protein operates within cofactor biosynthesis; pyridoxine 5'-phosphate biosynthesis; pyridoxine 5'-phosphate from D-erythrose 4-phosphate: step 5/5. Its function is as follows. Catalyzes the complicated ring closure reaction between the two acyclic compounds 1-deoxy-D-xylulose-5-phosphate (DXP) and 3-amino-2-oxopropyl phosphate (1-amino-acetone-3-phosphate or AAP) to form pyridoxine 5'-phosphate (PNP) and inorganic phosphate. This chain is Pyridoxine 5'-phosphate synthase, found in Sulfurimonas denitrificans (strain ATCC 33889 / DSM 1251) (Thiomicrospira denitrificans (strain ATCC 33889 / DSM 1251)).